We begin with the raw amino-acid sequence, 606 residues long: Limonene synthase, chloroplastic (606 aa).

Residues 1 to 38 (MAIINLPVPTNSSSEVNKHNHLRSCLPSGRATFTTLSA) constitute a chloroplast transit peptide. Residues arginine 320, aspartate 357, aspartate 361, arginine 497, and aspartate 500 each coordinate (2E)-geranyl diphosphate. 2 residues coordinate Mg(2+): aspartate 357 and aspartate 361. A DDXXD motif motif is present at residues 357–361 (DDIYD). Mg(2+) contacts are provided by aspartate 500, threonine 504, and glutamate 508.

Belongs to the terpene synthase family. Tpsb subfamily. In terms of assembly, monomer. Mg(2+) is required as a cofactor. Requires Mn(2+) as cofactor. In terms of tissue distribution, confined to fruits.

It localises to the plastid. The protein resides in the chloroplast. It carries out the reaction (2E,6E)-farnesyl diphosphate = (E)-beta-farnesene + diphosphate. It catalyses the reaction (2E)-geranyl diphosphate = limonene + diphosphate. The enzyme catalyses (2E)-geranyl diphosphate = beta-pinene + diphosphate. The catalysed reaction is (2E)-geranyl diphosphate = sabinene + diphosphate. It carries out the reaction (2E)-geranyl diphosphate = beta-myrcene + diphosphate. It catalyses the reaction (2E)-geranyl diphosphate = alpha-pinene + diphosphate. The enzyme catalyses (2E)-geranyl diphosphate = terpinolene + diphosphate. It functions in the pathway secondary metabolite biosynthesis; terpenoid biosynthesis. Functionally, monoterpene synthase (mono-TPS) involved in the biosynthesis of monoterpenes natural products, constituent of coffee beverage aroma. Catalyzes the conversion of (2E)-geranyl diphosphate (GPP) into limonene, beta-pinene, sabinene and beta-myrcene, and, as minor products, alpha-pinene and alpha-terpinolene. Can also, with a low efficiency, use farnesyl pyrophosphate (FPP) as substrate to produce beta-farnesene. Not able to use geranylgeranyl pyrophosphate (GGPP) as substrate. The chain is Limonene synthase, chloroplastic from Coffea arabica (Arabian coffee).